A 239-amino-acid chain; its full sequence is Lactate utilization protein A (239 aa).

It belongs to the LutA/YkgE family.

Its function is as follows. Is involved in L-lactate degradation and allows cells to grow with lactate as the sole carbon source. The polypeptide is Lactate utilization protein A (Bacillus cereus (strain B4264)).